The chain runs to 539 residues: GMP synthase [glutamine-hydrolyzing] (539 aa).

A Glutamine amidotransferase type-1 domain is found at 4-202; it reads KILILDFGSQ…VLGIAGCKPD (199 aa). Cys-81 functions as the Nucleophile in the catalytic mechanism. Residues His-176 and Glu-178 contribute to the active site. In terms of domain architecture, GMPS ATP-PPase spans 203–395; it reads WVMRDHIEEA…LGLPPEMVYR (193 aa). 230–236 contacts ATP; sequence SGGVDSS.

In terms of assembly, homodimer.

It carries out the reaction XMP + L-glutamine + ATP + H2O = GMP + L-glutamate + AMP + diphosphate + 2 H(+). It participates in purine metabolism; GMP biosynthesis; GMP from XMP (L-Gln route): step 1/1. Its function is as follows. Catalyzes the synthesis of GMP from XMP. This Cupriavidus necator (strain ATCC 17699 / DSM 428 / KCTC 22496 / NCIMB 10442 / H16 / Stanier 337) (Ralstonia eutropha) protein is GMP synthase [glutamine-hydrolyzing].